The following is a 234-amino-acid chain: Leucyl/phenylalanyl-tRNA--protein transferase (234 aa).

This sequence belongs to the L/F-transferase family.

It is found in the cytoplasm. The enzyme catalyses N-terminal L-lysyl-[protein] + L-leucyl-tRNA(Leu) = N-terminal L-leucyl-L-lysyl-[protein] + tRNA(Leu) + H(+). It catalyses the reaction N-terminal L-arginyl-[protein] + L-leucyl-tRNA(Leu) = N-terminal L-leucyl-L-arginyl-[protein] + tRNA(Leu) + H(+). It carries out the reaction L-phenylalanyl-tRNA(Phe) + an N-terminal L-alpha-aminoacyl-[protein] = an N-terminal L-phenylalanyl-L-alpha-aminoacyl-[protein] + tRNA(Phe). In terms of biological role, functions in the N-end rule pathway of protein degradation where it conjugates Leu, Phe and, less efficiently, Met from aminoacyl-tRNAs to the N-termini of proteins containing an N-terminal arginine or lysine. The polypeptide is Leucyl/phenylalanyl-tRNA--protein transferase (Escherichia fergusonii (strain ATCC 35469 / DSM 13698 / CCUG 18766 / IAM 14443 / JCM 21226 / LMG 7866 / NBRC 102419 / NCTC 12128 / CDC 0568-73)).